The following is a 420-amino-acid chain: Acyl-coenzyme A amino acid N-acyltransferase 2 (420 aa).

Catalysis depends on charge relay system residues serine 235, aspartate 329, and histidine 363. A Microbody targeting signal motif is present at residues 418 to 420; it reads SKL.

This sequence belongs to the C/M/P thioester hydrolase family.

It localises to the peroxisome. In terms of biological role, acyltransferase which efficiently conjugates very long-chain and long-chain fatty acids to taurine. Shows no conjugation activity in the presence of glycine. The polypeptide is Acyl-coenzyme A amino acid N-acyltransferase 2 (Mus musculus (Mouse)).